The chain runs to 93 residues: Small ribosomal subunit protein uS19 (93 aa).

This sequence belongs to the universal ribosomal protein uS19 family.

Its function is as follows. Protein S19 forms a complex with S13 that binds strongly to the 16S ribosomal RNA. This Leptospira borgpetersenii serovar Hardjo-bovis (strain JB197) protein is Small ribosomal subunit protein uS19.